A 1024-amino-acid chain; its full sequence is NLR family CARD domain-containing protein 4 (1024 aa).

The CARD domain maps to 1–88 (MNFIKDNSRA…PLFQDLNGQS (88 aa)). The segment at 95–298 (EGDLDDLAQD…QFGALTAEVG (204 aa)) is nucleotide-binding domain (NBD). One can recognise an NACHT domain in the interval 163–476 (SPCIIEGESG…VTKGNGYLQK (314 aa)). 169–176 (GESGKGKS) contacts ATP. The segment at 356-463 (SHTQTTLFHT…RLSSLLTSHE (108 aa)) is winged-helix domain (WHD). Ser533 bears the Phosphoserine mark. 12 LRR repeats span residues 578–598 (FFQG…LFDF), 656–679 (KQEF…DIRY), 735–758 (VTNL…LTDS), 762–785 (LKNL…KLAE), 787–812 (LKNL…DYIV), 824–847 (EIQL…LHNL), 848–870 (VKLS…ALHE), 878–902 (LEQL…LLKH), 911–933 (KLGL…FFGK), 936–963 (LKNF…VFEN), 965–985 (KQLV…ALVR), and 999–1021 (EARL…AFKL).

In terms of assembly, homooligomer; homooligomerizes to induce formation of the NLRC4 inflammasome. Homooligomerizes following activation by pathogenic proteins. Component of the NLRC4 inflammasome, at least composed of NLRC4 and caspase-1 (CASP1). Some NLRC4 inflammasomes contain PYCARD/ASC, while some others directly contact and activate CASP1. Interacts (via CARD domain) with PYCARD/ASC, pro-caspase-1 (CASP1), NOD2, BCL10 and NALP1 (NAC) by CARD-CARD interaction. Interacts with EIF2AK2/PKR. In terms of processing, phosphorylated at Ser-533 following infection of macrophages with S.typhimurium (Salmonella). Phosphorylation is essential for NLRC4 inflammasome function to promote caspase-1 activation and pyroptosis. PRKCD phosphorylates Ser-533 in vitro. Isoform 2 is expressed ubiquitously, although highly expressed in lung and spleen. Isoform 1 is highly expressed in lung, followed by leukocytes especially monocytes, lymph node, colon, brain, prostate, placenta, spleen, bone marrow and fetal liver. Isoform 4 is only detected in brain.

It localises to the cytoplasm. The protein localises to the cytosol. The protein resides in the inflammasome. Its function is as follows. Key component of inflammasomes that indirectly senses specific proteins from pathogenic bacteria and fungi and responds by assembling an inflammasome complex that promotes caspase-1 activation, cytokine production and macrophage pyroptosis. The NLRC4 inflammasome is activated as part of the innate immune response to a range of intracellular bacteria. In Homo sapiens (Human), this protein is NLR family CARD domain-containing protein 4 (NLRC4).